Consider the following 715-residue polypeptide: Protein MTSS 2 (715 aa).

Residues 1 to 249 enclose the IMD domain; it reads METAEKECGA…EQVIKDLKGS (249 aa). The stretch at 134–156 forms a coiled coil; sequence HEIKKKSSDTLKLQKKARKGKGD. Low complexity-rich tracts occupy residues 253 to 274, 284 to 295, and 312 to 330; these read WSYQ…SMCS, SSVSSHDSGFVS, and TSQK…TCQS. Disordered regions lie at residues 253–405, 420–485, and 527–562; these read WSYQ…EVSP, LEHQ…RNSN, and IRRT…PTVP. T257 is subject to Phosphothreonine. S261 carries the phosphoserine modification. Over residues 331 to 341 the composition is skewed to polar residues; that stretch reads VSECSSPTSDW. Residues 360–369 are compositionally biased toward basic and acidic residues; the sequence is DRVEHLRDTE. S404 carries the phosphoserine modification. Residues 429–442 show a composition bias toward low complexity; that stretch reads SLQYSSGYSTQTTT. Polar residues predominate over residues 443–455; the sequence is PSCSEDTIPSQGS. A phosphoserine mark is found at S542, S564, S575, S587, S597, and S602. Phosphothreonine is present on T606. A disordered region spans residues 661-690; the sequence is FPFPTALSATPSEETPTPPPAATSDPPAED. The WH2 domain occupies 687–704; sequence PAEDMLVAIRRGVRLRRT.

Belongs to the MTSS family. Interacts (via IMD domain) with RAC1; this interaction may be important to potentiate PDGF-induced RAC1 activation.

Its subcellular location is the cytoplasm. The protein resides in the cell projection. It localises to the ruffle. In terms of biological role, involved in plasma membrane dynamics. Potentiated PDGF-mediated formation of membrane ruffles and lamellipodia in fibroblasts, acting via RAC1 activation. May function in actin bundling. This Mus musculus (Mouse) protein is Protein MTSS 2 (Mtss2).